Consider the following 262-residue polypeptide: MGFLSGKRILVTGVASKLSIAYGIAQAMHREGAELAFTYQNDKLKGRVEEFAAQLGSDIVLQCDVAEDASIDTMFAELGKVWPKFDGFVHSIGFAPGDQLDGDYVNAVTREGFKIAHDISSYSFVAMAKACRSMLNPGSALLTLSYLGAERAIPNYNVMGLAKASLEANVRYMANAMGPEGVRVNAISAGPIRTLAASGIKDFRKMLAHCEAVTPIRRTVTIEDVGNSAAFLCSDLSAGISGEVVHVDGGFSIAAMNELELK.

NAD(+) is bound by residues Gly-13, 19–20 (SI), Gln-40, 64–65 (DV), and Ile-92. Position 95 (Ala-95) interacts with substrate. Catalysis depends on proton acceptor residues Tyr-146 and Tyr-156. NAD(+) contacts are provided by residues Lys-163 and 192–196 (IRTLA).

This sequence belongs to the short-chain dehydrogenases/reductases (SDR) family. FabI subfamily. As to quaternary structure, homotetramer.

It catalyses the reaction a 2,3-saturated acyl-[ACP] + NAD(+) = a (2E)-enoyl-[ACP] + NADH + H(+). The enzyme catalyses (2E)-butenoyl-[ACP] + NADH + H(+) = butanoyl-[ACP] + NAD(+). The catalysed reaction is (2E)-decenoyl-[ACP] + NADH + H(+) = decanoyl-[ACP] + NAD(+). It carries out the reaction (2E)-hexadecenoyl-[ACP] + NADH + H(+) = hexadecanoyl-[ACP] + NAD(+). It catalyses the reaction (2E,9Z)-hexadecadienoyl-[ACP] + NADH + H(+) = (9Z)-hexadecenoyl-[ACP] + NAD(+). The enzyme catalyses (2E)-5-methylhexenoyl-[ACP] + NADH + H(+) = 5-methylhexanoyl-[ACP] + NAD(+). The protein operates within lipid metabolism; fatty acid biosynthesis. Its pathway is cofactor biosynthesis; biotin biosynthesis. Its activity is regulated as follows. Inhibited by diazaborines, triclosan (5-chloro-2-2,4-dichlorophenoxyphenol), 1,4-disubstituted imidazoles, 1,4-benzodiazepine derivatives, naphthyridinone derivatives, luteolin and curcumin. The antibiotic diazaborine interferes with the activity by binding to the protein and NAD. Its function is as follows. Catalyzes the reduction of a carbon-carbon double bond in an enoyl moiety that is covalently linked to an acyl carrier protein (ACP). Involved in the elongation cycle of fatty acid which are used in the lipid metabolism and in the biotin biosynthesis. This is Enoyl-[acyl-carrier-protein] reductase [NADH] FabI (fabI) from Escherichia coli (strain K12).